The following is a 403-amino-acid chain: D-mannonate dehydratase (403 aa).

The substrate site is built by Asn-38 and His-123. The active-site Proton donor/acceptor is the Tyr-160. A Mg(2+)-binding site is contributed by Asp-211. His-213 functions as the Proton donor/acceptor in the catalytic mechanism. Mg(2+)-binding residues include Glu-237 and Glu-263. Substrate-binding residues include Glu-263, Arg-284, His-313, Asp-317, and Glu-340.

The protein belongs to the mandelate racemase/muconate lactonizing enzyme family. GalD subfamily. It depends on Mg(2+) as a cofactor.

It carries out the reaction D-mannonate = 2-dehydro-3-deoxy-D-gluconate + H2O. Its pathway is carbohydrate metabolism; pentose and glucuronate interconversion. Catalyzes the dehydration of D-mannonate. Has no detectable activity with a panel of 70 other acid sugars (in vitro). This is D-mannonate dehydratase from Sphingomonas sp. (strain SKA58).